The primary structure comprises 185 residues: Shikimate kinase (185 aa).

15-20 (GAGKST) provides a ligand contact to ATP. Ser-19 lines the Mg(2+) pocket. Asp-37, Arg-61, and Gly-83 together coordinate substrate. Arg-121 is a binding site for ATP. A substrate-binding site is contributed by Arg-146.

It belongs to the shikimate kinase family. In terms of assembly, monomer. It depends on Mg(2+) as a cofactor.

The protein localises to the cytoplasm. The catalysed reaction is shikimate + ATP = 3-phosphoshikimate + ADP + H(+). It participates in metabolic intermediate biosynthesis; chorismate biosynthesis; chorismate from D-erythrose 4-phosphate and phosphoenolpyruvate: step 5/7. In terms of biological role, catalyzes the specific phosphorylation of the 3-hydroxyl group of shikimic acid using ATP as a cosubstrate. This Blochmanniella floridana protein is Shikimate kinase.